Consider the following 239-residue polypeptide: 1-(5-phosphoribosyl)-5-[(5-phosphoribosylamino)methylideneamino] imidazole-4-carboxamide isomerase (239 aa).

The active-site Proton acceptor is D8. D129 (proton donor) is an active-site residue.

Belongs to the HisA/HisF family.

Its subcellular location is the cytoplasm. The enzyme catalyses 1-(5-phospho-beta-D-ribosyl)-5-[(5-phospho-beta-D-ribosylamino)methylideneamino]imidazole-4-carboxamide = 5-[(5-phospho-1-deoxy-D-ribulos-1-ylimino)methylamino]-1-(5-phospho-beta-D-ribosyl)imidazole-4-carboxamide. The protein operates within amino-acid biosynthesis; L-histidine biosynthesis; L-histidine from 5-phospho-alpha-D-ribose 1-diphosphate: step 4/9. The polypeptide is 1-(5-phosphoribosyl)-5-[(5-phosphoribosylamino)methylideneamino] imidazole-4-carboxamide isomerase (Bacillus cytotoxicus (strain DSM 22905 / CIP 110041 / 391-98 / NVH 391-98)).